The primary structure comprises 110 residues: uncharacterized protein (110 aa).

Positions 1–26 (MIRNVLLAFMICSGMTLLGGCSSVMS) are cleaved as a signal peptide. The interval 87–110 (RVEKSEANAQATNAVIPPARMPDN) is disordered.

It to E.coli YceK.

This is an uncharacterized protein from Escherichia coli (strain K12).